The primary structure comprises 245 residues: Ribosomal RNA large subunit methyltransferase E (245 aa).

Glycine 83, tryptophan 85, aspartate 111, aspartate 127, and aspartate 156 together coordinate S-adenosyl-L-methionine. Lysine 196 functions as the Proton acceptor in the catalytic mechanism.

The protein belongs to the class I-like SAM-binding methyltransferase superfamily. RNA methyltransferase RlmE family.

The protein resides in the cytoplasm. The catalysed reaction is uridine(2552) in 23S rRNA + S-adenosyl-L-methionine = 2'-O-methyluridine(2552) in 23S rRNA + S-adenosyl-L-homocysteine + H(+). Its function is as follows. Specifically methylates the uridine in position 2552 of 23S rRNA at the 2'-O position of the ribose in the fully assembled 50S ribosomal subunit. This Polaromonas naphthalenivorans (strain CJ2) protein is Ribosomal RNA large subunit methyltransferase E.